The following is a 215-amino-acid chain: Pyridoxine/pyridoxamine 5'-phosphate oxidase (215 aa).

Residues 9–12 (RRDY) and lysine 67 contribute to the substrate site. Residues 62–67 (RVVLLK), 77–78 (FT), lysine 84, and glutamine 106 each bind FMN. Residues tyrosine 124, arginine 128, and serine 132 each coordinate substrate. Residues 141–142 (QS) and tryptophan 186 contribute to the FMN site. 192 to 194 (RLH) lines the substrate pocket. An FMN-binding site is contributed by arginine 196.

The protein belongs to the pyridoxamine 5'-phosphate oxidase family. As to quaternary structure, homodimer. Requires FMN as cofactor.

It carries out the reaction pyridoxamine 5'-phosphate + O2 + H2O = pyridoxal 5'-phosphate + H2O2 + NH4(+). The enzyme catalyses pyridoxine 5'-phosphate + O2 = pyridoxal 5'-phosphate + H2O2. It participates in cofactor metabolism; pyridoxal 5'-phosphate salvage; pyridoxal 5'-phosphate from pyridoxamine 5'-phosphate: step 1/1. It functions in the pathway cofactor metabolism; pyridoxal 5'-phosphate salvage; pyridoxal 5'-phosphate from pyridoxine 5'-phosphate: step 1/1. Its function is as follows. Catalyzes the oxidation of either pyridoxine 5'-phosphate (PNP) or pyridoxamine 5'-phosphate (PMP) into pyridoxal 5'-phosphate (PLP). This is Pyridoxine/pyridoxamine 5'-phosphate oxidase from Chromohalobacter salexigens (strain ATCC BAA-138 / DSM 3043 / CIP 106854 / NCIMB 13768 / 1H11).